An 804-amino-acid chain; its full sequence is G-type lectin S-receptor-like serine/threonine-protein kinase LECRK4 (804 aa).

The signal sequence occupies residues 1-23 (MAPPLFLLSLQLLVLLSSPSAQA). In terms of domain architecture, Bulb-type lectin spans 24–150 (QNISLGTSLT…GGSTISWETF (127 aa)). Over 24 to 458 (QNISLGTSLT…DKKLWILGSS (435 aa)) the chain is Extracellular. Residues Asn25, Asn58, Asn216, Asn227, Asn238, and Asn243 are each glycosylated (N-linked (GlcNAc...) asparagine). The region spanning 290-341 (PENICNAQTKVGSGTCGFNSYCMFDGSNNQTSCVCPEQYSFFDEVRKYRGCR) is the EGF-like; atypical domain. Cystine bridges form between Cys294–Cys311, Cys305–Cys322, Cys324–Cys340, Cys386–Cys406, and Cys390–Cys396. N-linked (GlcNAc...) asparagine glycosylation is present at Asn318. The PAN domain maps to 349 to 426 (CDLDEAASMA…IMGSGVQRTV (78 aa)). Asn434 carries N-linked (GlcNAc...) asparagine glycosylation. Residues 459 to 479 (LLLGGSVIANFALSSVLLFGT) form a helical membrane-spanning segment. Over 480–804 (YCTITRKDVQ…DSSSVVNSFP (325 aa)) the chain is Cytoplasmic. Residues 514 to 790 (DGFKEVLGTG…TQMLDGADAI (277 aa)) form the Protein kinase domain. Residues 520-528 (LGTGASGIV) and Lys544 contribute to the ATP site. Asp638 serves as the catalytic Proton acceptor.

This sequence belongs to the protein kinase superfamily. Ser/Thr protein kinase family.

The protein resides in the membrane. The enzyme catalyses L-seryl-[protein] + ATP = O-phospho-L-seryl-[protein] + ADP + H(+). It carries out the reaction L-threonyl-[protein] + ATP = O-phospho-L-threonyl-[protein] + ADP + H(+). Does not seem to be involved in resistance against the herbivorous insect brown planthopper (N.lugens, BPH). The protein is G-type lectin S-receptor-like serine/threonine-protein kinase LECRK4 of Oryza sativa subsp. indica (Rice).